Here is a 439-residue protein sequence, read N- to C-terminus: Sequestosome-1 (439 aa).

Ala2 bears the N-acetylalanine mark. The tract at residues 2–48 (ASLTVKAYLLGKEEAAREIRRFSFCFSPEPEAEAAAGPGPCERLLSR) is interaction with LCK. One can recognise a PB1 domain in the interval 3–100 (SLTVKAYLLG…DIFRIYIKEK (98 aa)). Ser24 is subject to Phosphoserine. Residues 41–105 (PCERLLSRVA…YIKEKKECRR (65 aa)) form an interaction with PRKCZ and dimerization region. The tract at residues 48 to 78 (RVAVLFPALRPGGFQAHYRDEDGDLVAFSSD) is interaction with PAWR. The interval 119–221 (VHPNVICDGC…DGRPCPTAES (103 aa)) is interaction with GABRR3. Residues 120–170 (HPNVICDGCNGPVVGTRYKCSVCPDYDLCSVCEGKGLHREHSKLIFPNPFG) form a ZZ-type zinc finger. 4 residues coordinate Zn(2+): Cys125, Cys128, Cys139, and Cys142. Tyr145 is subject to Phosphotyrosine. Residues Cys148, Cys151, His157, and His160 each coordinate Zn(2+). Residues 167-217 (NPFGHLSDSFSHSRWLRKLKHGHFGWPGWEMGPPGNWSPRPPRAGDGRPCP) form an LIM protein-binding region. 3 positions are modified to phosphoserine: Ser173, Ser175, and Ser204. A disordered region spans residues 201 to 231 (GNWSPRPPRAGDGRPCPTAESASAPSEDPNV). The short motif at 225–230 (PSEDPN) is the TRAF6-binding element. Residues Ser246 and Ser263 each carry the phosphoserine modification. A disordered region spans residues 259–389 (GGKRSRLTPT…ALYPHLPPEA (131 aa)). Over residues 265-292 (LTPTSAESSSTGTEDKSGTQPSSCSSEV) the composition is skewed to polar residues. At Thr266 the chain carries Phosphothreonine. An interaction with NTRK1 region spans residues 266-439 (TPTSAESSST…IQYSKHPPPL (174 aa)). A phosphoserine mark is found at Ser269 and Ser281. Residue Cys288 is the site of S-palmitoyl cysteine attachment. Phosphoserine occurs at positions 305, 327, and 331. Residues 320–341 (QPEELMESDNCSGGDDDWTHLS) are MAP1LC3B-binding. The LIR motif lies at 335–340 (DDWTHL). Positions 336–346 (DWTHLSSKEVD) are enriched in basic and acidic residues. The tract at residues 346 to 351 (DPSTGE) is interaction with KEAP1. 5 positions are modified to phosphoserine: Ser348, Ser354, Ser360, Ser364, and Ser365. Polar residues predominate over residues 350–372 (GELQSLQMPESEGPSSLDPSQEG). The 46-residue stretch at 388–433 (EADPRLIESLSQMLSMGFSDEGGWLTRLLQTKNYDIGAALDTIQYS) folds into the UBA domain. Phosphoserine; by ULK1 and TBK1 is present on Ser402. Position 406 is a phosphoserine (Ser406). N6-acetyllysine; alternate is present on residues Lys419 and Lys434. A Glycyl lysine isopeptide (Lys-Gly) (interchain with G-Cter in ubiquitin); alternate cross-link involves residue Lys419. Lys434 participates in a covalent cross-link: Glycyl lysine isopeptide (Lys-Gly) (interchain with G-Cter in SUMO2); alternate.

Homooligomer or heterooligomer; may form homotypic arrays. Dimerization interferes with ubiquitin binding. Component of a ternary complex with PAWR and PRKCZ. Forms a complex with JUB/Ajuba, PRKCZ and TRAF6. Identified in a complex with TRAF6 and CYLD. Identified in a heterotrimeric complex with ubiquitin and ZFAND5, where ZFAND5 and SQSTM1 both interact with the same ubiquitin molecule. Interacts (via LIR motif) with MAP1LC3A and MAP1LC3B, as well as with other ATG8 family members, including GABARAP, GABARAPL1 and GABARAPL2; these interactions are necessary for the recruitment MAP1 LC3 family members to inclusion bodies containing polyubiquitinated protein aggregates and for their degradation by autophagy. Interacts directly with PRKCI and PRKCZ. Interacts with EBI3, LCK, RASA1, NR2F2, NTRK1, NTRK2, NTRK3, NBR1, MAP2K5 and MAPKAPK5. Upon TNF-alpha stimulation, interacts with RIPK1 probably bridging IKBKB to the TNF-R1 complex composed of TNF-R1/TNFRSF1A, TRADD and RIPK1. Interacts with the proteasome subunits PSMD4 and PSMC2. Interacts with TRAF6. Interacts with 'Lys-63'-linked polyubiquitinated MAPT/TAU. Interacts with FHOD3. Interacts with CYLD. Interacts with SESN1. Interacts with SESN2. Interacts with ULK1. Interacts with UBD. Interacts with WDR81; the interaction is direct and regulates the interaction of SQSTM1 with ubiquitinated proteins. Interacts with WDFY3; this interaction is required to recruit WDFY3 to cytoplasmic bodies and to PML bodies. Interacts with LRRC25. Interacts with STING1; leading to relocalization of STING1 to autophagosomes. Interacts (when phosphorylated at Ser-348) with KEAP1; the interaction is direct and inactivates the BCR(KEAP1) complex by sequestering KEAP1 in inclusion bodies, promoting its degradation. Interacts with MOAP1; promoting dissociation of SQSTM1 inclusion bodies that sequester KEAP1. Interacts with GBP1. Interacts with TAX1BP1. Interacts with (ubiquitinated) PEX5; specifically binds PEX5 ubiquitinated at 'Lys-209' in response to reactive oxygen species (ROS). Interacts (via PB1 domain) with TNS2; the interaction leads to sequestration of TNS2 in cytoplasmic aggregates with SQSTM1 and promotes TNS2 ubiquitination and proteasomal degradation. Interacts with IRS1; the interaction is disrupted by the presence of tensin TNS2. Interacts with TRIM5. Interacts with TRIM11 (when ubiquitinated); promoting AIM2 recruitment to autophagosomes and autophagy-dependent degradation of AIM2. Interacts with TRIM13. Interacts with TRIM16. Interacts with TRIM23. Interacts with TRIM50. Interacts with TRIM55. Interacts with ECSIT; this interaction inhibits TLR4 signaling via functional regulation of the TRAF6-ECSIT complex. Interacts with GABRR1, GABRR2 and GABRR3. Interacts with WDR83. Interacts with GRB2. Interacts with USP12; the interaction is independent of USP12 deubiquitinase activity and may be involved in regulation of autophagic flux. Interacts with ASB6. In terms of processing, phosphorylated. Phosphorylation at Ser-406 by ULK1 destabilizes the UBA dimer interface and increases binding affinity to ubiquitinated proteins. Phosphorylation at Ser-406 also primes for subsequent phosphorylation at Ser-402. Phosphorylation at Ser-402 by CK2 or ULK1 promotes binding to ubiquitinated proteins by increasing the affinity between the UBA domain and polyubiquitin chains. Phosphorylation at Ser-402 by ULK1 is stimulated by SESN2. Phosphorylated at Ser-402 by TBK1, leading to promote relocalization of 'Lys-63'-linked ubiquitinated STING1 to autophagosomes. Phosphorylation at Ser-348 by ULK1 promotes interaction with KEAP1 and inactivation of the BCR(KEAP1) complex, promoting NFE2L2/NRF2 nuclear accumulation and expression of phase II detoxifying enzymes. Phosphorylated in vitro by TTN. Post-translationally, ubiquitinated by UBE2J1 and RNF26 at Lys-434: ubiquitinated SQSTM1 attracts specific vesicle-associated adapters, forming a molecular bridge that restrains cognate vesicles in the perinuclear region and organizes the endosomal pathway for efficient cargo transport. Ubiquitination by UBE2D2 and UBE2D3 increases its ability to bind polyubiquitin chains by destabilizing the UBA dimer interface. Deubiquitination by USP15 releases target vesicles for fast transport into the cell periphery. Ubiquitinated by the BCR(KEAP1) complex at Lys-419, increasing SQSTM1 sequestering activity and promoting its degradation. Ubiquitinated via 'Lys-29' and 'Lys-33'-linked polyubiquitination leading to xenophagic targeting of bacteria and inhibition of their replication. Acetylated at Lys-419 and Lys-434 by KAT5/TIP60, promotes activity by destabilizing the UBA dimer interface and increases binding affinity to ubiquitinated proteins. Deacetylated by HDAC6. In terms of processing, palmitoylation at Cys-288 by ZDHHC19 is required for efficient autophagic degradation of SQSTM1-cargo complexes by promoting affinity for ATG8 proteins and recruitment of p62 bodies to autophagosomes. Dealmitoylated at Cys-288 by LYPLA1. As to expression, ubiquitously expressed. In brain, mainly expressed by neurons, especially pyramidal neurons in the cerebral cortex and hippocampus. Also expressed by Purkinje cells and neurons in the dentate nucleus of the cerebellum and neurons of the basal ganglia (at protein level).

The protein localises to the cytoplasmic vesicle. It is found in the autophagosome. It localises to the preautophagosomal structure. The protein resides in the cytoplasm. Its subcellular location is the cytosol. The protein localises to the nucleus. It is found in the PML body. It localises to the late endosome. The protein resides in the lysosome. Its subcellular location is the endoplasmic reticulum. The protein localises to the myofibril. It is found in the sarcomere. In terms of biological role, molecular adapter required for selective macroautophagy (aggrephagy) by acting as a bridge between polyubiquitinated proteins and autophagosomes. Promotes the recruitment of ubiquitinated cargo proteins to autophagosomes via multiple domains that bridge proteins and organelles in different steps. SQSTM1 first mediates the assembly and removal of ubiquitinated proteins by undergoing liquid-liquid phase separation upon binding to ubiquitinated proteins via its UBA domain, leading to the formation of insoluble cytoplasmic inclusions, known as p62 bodies. SQSTM1 then interacts with ATG8 family proteins on autophagosomes via its LIR motif, leading to p62 body recruitment to autophagosomes, followed by autophagic clearance of ubiquitinated proteins. SQSTM1 is itself degraded along with its ubiquitinated cargos. Also required to recruit ubiquitinated proteins to PML bodies in the nucleus. Also involved in autophagy of peroxisomes (pexophagy) in response to reactive oxygen species (ROS) by acting as a bridge between ubiquitinated PEX5 receptor and autophagosomes. Acts as an activator of the NFE2L2/NRF2 pathway via interaction with KEAP1: interaction inactivates the BCR(KEAP1) complex by sequestering the complex in inclusion bodies, promoting nuclear accumulation of NFE2L2/NRF2 and subsequent expression of cytoprotective genes. Promotes relocalization of 'Lys-63'-linked ubiquitinated STING1 to autophagosomes. Involved in endosome organization by retaining vesicles in the perinuclear cloud: following ubiquitination by RNF26, attracts specific vesicle-associated adapters, forming a molecular bridge that restrains cognate vesicles in the perinuclear region and organizes the endosomal pathway for efficient cargo transport. Sequesters tensin TNS2 into cytoplasmic puncta, promoting TNS2 ubiquitination and proteasomal degradation. May regulate the activation of NFKB1 by TNF-alpha, nerve growth factor (NGF) and interleukin-1. May play a role in titin/TTN downstream signaling in muscle cells. Adapter that mediates the interaction between TRAF6 and CYLD. More potent than isoform 2 to stimulate PRKCZ-dependent phosphorylation of KCNAB2. The chain is Sequestosome-1 (Sqstm1) from Rattus norvegicus (Rat).